The primary structure comprises 2407 residues: Daf-12-interacting protein 1 (2407 aa).

Over residues 90–112 (QNSSMASMSSTPSSGQSSSPRNA) the composition is skewed to low complexity. Residues 90–152 (QNSSMASMSS…PHLSVQSQQR (63 aa)) are disordered. The region spanning 277–335 (CSVHVPHLDRHSPDHYRRRFESYGQVIDVDMVKSNDNKAFAVVQFTNIDDAQKALQDTN) is the RRM domain. 11 disordered regions span residues 439–632 (EVAA…LELD), 737–767 (ATDS…TNRL), 785–849 (LCIG…GRPA), 874–896 (PTHD…ETMV), 921–986 (LIAA…PSNA), 993–1012 (RSQS…TPVV), 1025–1844 (SNQP…EDSE), 1858–1918 (IAQE…VNNH), 1932–1976 (LQPA…QQSD), 2077–2103 (EENE…LAAA), and 2172–2200 (SIQR…VNQN). A compositionally biased stretch (polar residues) spans 443 to 456 (RSSSPTSKSENDQG). Over residues 512–529 (EDSDEQNDVDEEDDEDVV) the composition is skewed to acidic residues. Composition is skewed to basic and acidic residues over residues 530-541 (SEEKRHEPEEGK), 548-564 (GHRD…DSSE), and 573-586 (SHHE…KDSE). Residues 587–603 (AYQSRSFSPLNYQSQSP) show a composition bias toward polar residues. The segment covering 618–627 (SPTTSSASSS) has biased composition (low complexity). Composition is skewed to polar residues over residues 791 to 826 (TPST…TPRS) and 837 to 849 (SRHN…GRPA). The span at 924–946 (ATSTGTHSVSSSAHSTPRHSISG) shows a compositional bias: polar residues. Basic and acidic residues predominate over residues 966–978 (SRPEKVQIRHDTI). Residues 1043-1052 (SALQNIQNHQ) show a composition bias toward polar residues. Over residues 1053–1070 (PPHSNANSTPSTPSTSTH) the composition is skewed to low complexity. The span at 1086–1153 (KEKEEREREA…KVRKKAEKEK (68 aa)) shows a compositional bias: basic and acidic residues. Over residues 1165 to 1177 (SDESDSDSNDELD) the composition is skewed to acidic residues. Basic and acidic residues-rich tracts occupy residues 1178-1195 (LDVR…KDHQ), 1218-1227 (RAHDSFEKMQ), 1279-1293 (ADQR…EKGE), 1304-1320 (NDAG…DREN), 1335-1355 (QGER…DAAA), and 1376-1398 (RRSS…PHED). Composition is skewed to low complexity over residues 1456–1471 (PKHL…TKRS) and 1488–1498 (TTSSTSTATTS). Over residues 1534 to 1547 (SMNSAADSPMSTTG) the composition is skewed to polar residues. Positions 1570–1595 (SSSGQHDSSSGSSSDSSSSDGSTSSD) are enriched in low complexity. Basic and acidic residues-rich tracts occupy residues 1679–1691 (SEEH…HGDS) and 1703–1726 (EHQE…HEEQ). The span at 1749-1770 (TQAQEKSAHTLISDQETDQAVQ) shows a compositional bias: polar residues. Over residues 1792–1805 (NEKEVSGKDPHNIK) the composition is skewed to basic and acidic residues. Residues 1809-1826 (PLNNGHTDLLFSPSSSAH) show a composition bias toward polar residues. 2 stretches are compositionally biased toward basic and acidic residues: residues 1827 to 1836 (ASEKQSTKSE) and 1873 to 1892 (EEVK…KMEE). Composition is skewed to polar residues over residues 1895-1911 (EQTP…SQDT) and 1932-1942 (LQPASQHQVAQ). Residues 1962 to 1975 (SQQSQPSPMSSQQS) are compositionally biased toward low complexity. A coiled-coil region spans residues 2049-2110 (NQMMQAKMKQ…AAATAAATMA (62 aa)). A compositionally biased stretch (basic and acidic residues) spans 2077 to 2099 (EENERKVEEDRREKQRKEEERQR). The segment covering 2176–2186 (PSSTASTSSNP) has biased composition (low complexity). One can recognise an SPOC domain in the interval 2213-2383 (QRWFYKHFPM…TRYLLIVFTN (171 aa)).

In terms of assembly, isoform d interacts with daf-12. In terms of tissue distribution, isoform d is widely expressed: detected in the hypodermis, seam cells, intestine, somatic gonad, neurons, vulval precursors, body wall muscle and pharynx.

It localises to the nucleus. Functionally, probable transcriptional corepressor which modulates activity of the nuclear hormone receptor daf-12 to regulate the dauer diapause. This Caenorhabditis elegans protein is Daf-12-interacting protein 1.